The primary structure comprises 126 residues: Holo-[acyl-carrier-protein] synthase (126 aa).

Mg(2+) is bound by residues Asp-9 and Glu-58.

Belongs to the P-Pant transferase superfamily. AcpS family. Mg(2+) serves as cofactor.

It localises to the cytoplasm. It catalyses the reaction apo-[ACP] + CoA = holo-[ACP] + adenosine 3',5'-bisphosphate + H(+). Its function is as follows. Transfers the 4'-phosphopantetheine moiety from coenzyme A to a Ser of acyl-carrier-protein. The polypeptide is Holo-[acyl-carrier-protein] synthase (Shewanella denitrificans (strain OS217 / ATCC BAA-1090 / DSM 15013)).